The chain runs to 639 residues: MGRIIGIDLGTTNSCVAVLDGDKPRVIENAEGERTTASVVAYTQDGETLVGQPAKRQAVTNPENTLYAIKRLIGRRFEDEEVQRDLKIMPFKIVKADNGDAWVEAKGQKMAAPQVSAEILKKMKKTAEDFLGEEVTAAVITVPAYFNDAQRQATKDAGRIAGLEVKRIINEPTAAALAYGLDKKGGDRTIAVYDLGGGTFDISIIEIDEVEGEKTFEVLSTNGDTHLGGEDFDNRLINYLVEEFKKEQGMDLRNDPLAMQRLKEAAEKAKIELSSAQQTDVNLPYITADATGPKHMNIKVTRAKLESLVEDLVQRSLEPLKVALSDAGLSVSEITDIIVVGGQTRMPMVQAKVAEFFGKEPRKDVNPDEAVAVGAAVQAGVLAGDVKDVLLLDVTPLSLGIETMGGVMTKLIEKNTTIPTKANQVFSTAEDNQSAVTIHVLQGERKQSSYNKSLGQFNLEGIQAAARGMPQIEVTFDLDADGILHVSAKDKSTGKEQKITIQSSSGLSEEDIEKMVQEAEANKESDKKFEELVTARNQADQLIHGTRKQVEEAGEALPAEDKEKIEAAVSELEEARKAEDKEAIDAKVQALVAASQKLMEIAQQQAQAQQAPGGEGEQEAKQDDNVVDAEFEEVKDEKK.

Thr199 is subject to Phosphothreonine; by autocatalysis. The span at 603–612 (QQQAQAQQAP) shows a compositional bias: low complexity. The interval 603–639 (QQQAQAQQAPGGEGEQEAKQDDNVVDAEFEEVKDEKK) is disordered. Positions 625-639 (NVVDAEFEEVKDEKK) are enriched in acidic residues.

This sequence belongs to the heat shock protein 70 family.

Functionally, acts as a chaperone. This is Chaperone protein DnaK 1 from Photobacterium profundum (strain SS9).